A 314-amino-acid polypeptide reads, in one-letter code: Protein phosphatase PTC7 homolog fig (314 aa).

One can recognise a PPM-type phosphatase domain in the interval 43–309 (PYLVTVVQGR…DDITLILSSV (267 aa)). Mn(2+) contacts are provided by aspartate 87, glycine 88, and aspartate 232.

Belongs to the PP2C family. Mg(2+) serves as cofactor. The cofactor is Mn(2+).

It catalyses the reaction O-phospho-L-seryl-[protein] + H2O = L-seryl-[protein] + phosphate. It carries out the reaction O-phospho-L-threonyl-[protein] + H2O = L-threonyl-[protein] + phosphate. The chain is Protein phosphatase PTC7 homolog fig from Drosophila simulans (Fruit fly).